Consider the following 469-residue polypeptide: MAKTLYQKLYDAHIVREVPNETPLLYIDRHLVHEVTSPQAFDGLRTKGRPVHQPGKTFATMDHNVSTQTKDINACGDMARIQMQELMKNCAEFGITLYDLNHPYQGIVHVIGPEQGITLPGMTIVCGDSHTATHGAFGSLAFGIGTSEVEHVLASQTLKQARAKTMKIEVMGDVGDAITAKDIVLAIIGKTGSAGGTGYVVEFCGKAIEALSMEGRMTLCNMAIEMGAKAGLVAPDETTFTYMKGRQFSPKGELWEQAVAYWKTLKSDPDAQYDTIVTINAEEISPQVTWGTNPGQVIAIDQTIPAPESFSDPVERASAEKALAYMDLKPGIKLTDVKIDKVFIGSCTNSRIEDLRAAAAIAQGHKVAPGVQAIVVPGSGPVQAQAEAEGLDKIFIEAGFEWRLPGCSMCLAMNNDRLQPGERCASTSNRNFEGRQGRGGRTHLVSPAMAAAAAINGHFIDIRHPAQKS.

Positions 347, 407, and 410 each coordinate [4Fe-4S] cluster.

This sequence belongs to the aconitase/IPM isomerase family. LeuC type 1 subfamily. Heterodimer of LeuC and LeuD. The cofactor is [4Fe-4S] cluster.

The catalysed reaction is (2R,3S)-3-isopropylmalate = (2S)-2-isopropylmalate. Its pathway is amino-acid biosynthesis; L-leucine biosynthesis; L-leucine from 3-methyl-2-oxobutanoate: step 2/4. Functionally, catalyzes the isomerization between 2-isopropylmalate and 3-isopropylmalate, via the formation of 2-isopropylmaleate. In Photorhabdus laumondii subsp. laumondii (strain DSM 15139 / CIP 105565 / TT01) (Photorhabdus luminescens subsp. laumondii), this protein is 3-isopropylmalate dehydratase large subunit.